We begin with the raw amino-acid sequence, 430 residues long: MAVFPLSAKHRKYALRALAVSIILVSAAYIASTERTERVRPQRVEQNLPPLSWGGSGVQTAYWVQEAVQPGDSLADVLARSGMARDEIARITEKYGGEADLRHLRADQSVHVLVGGDGGAREVQFFTDEDGERNLVALEKKGGIWRRSASEADMKVLPTLRSVVVKTSARGSLARAEVPVEIRESLSGIFAGRFSLDGLKEGDAVRLMYDSLYFHGQQVAAGDILAAEVVKGGTRHQAFYYRSDKEGGGGGNYYDEDGKVLQEKGGFNIEPLVYTRISSPFGYRMHPILHTWRLHTGIDYAAPQGTPVRASADGVITFKGRKGGYGNAVMIRHANGVETLYAHLSAFSQAEGNVRGGEVIGFVGSTGRSTGPHLHYEARINGQPVNPVSVALPTPELTQADKAAFAAQKQKADALLARLRGIPVTVSQSD.

Positions 295, 299, and 375 each coordinate Zn(2+).

Belongs to the peptidase M23B family. As to quaternary structure, monomer. Requires Zn(2+) as cofactor. In terms of processing, likely to be synthesized as a proenzyme. The cleavage of the N-terminal domain is probably required for the activation of the enzyme.

It localises to the cell outer membrane. Its function is as follows. Has both endopeptidase and DD-carboxypeptidase activities. Degrades cell wall peptidoglycan (PG) to allow consummate expression of pili. The chain is DD-carboxypeptidase/endopeptidase Mpg from Neisseria meningitidis serogroup B (strain ATCC BAA-335 / MC58).